The primary structure comprises 1132 residues: Myosin-binding protein C, fast-type (1132 aa).

A disordered region spans residues 1–59 (MPEPSKAAPKKEAKKKEEKKEEKKEAPPPQEHKDEAPDDVHPPETPDPEGLFLSKPQNV). The span at 9-44 (PKKEAKKKEEKKEEKKEAPPPQEHKDEAPDDVHPPE) shows a compositional bias: basic and acidic residues. 5 consecutive Ig-like C2-type domains span residues 48 to 149 (PEGL…SIDV), 249 to 338 (SEAF…VKEP), 339 to 429 (PVTV…VEEK), 430 to 530 (QLEV…KQEP), and 531 to 630 (PKIH…VVDV). Fibronectin type-III domains lie at 633 to 729 (PPQS…IAPT) and 731 to 826 (EPTH…IREI). The Ig-like C2-type 6 domain occupies 830 to 923 (PKIRLPRHLR…ATLRLRVVER (94 aa)). One can recognise a Fibronectin type-III 3 domain in the interval 926–1022 (PPQAVRVMEV…HNTARIAKEG (97 aa)). The 94-residue stretch at 1039-1132 (PQFLTPLVDR…ECRLDVRVPQ (94 aa)) folds into the Ig-like C2-type 7 domain.

Belongs to the immunoglobulin superfamily. MyBP family.

Functionally, thick filament-associated protein located in the crossbridge region of vertebrate striated muscle a bands. In vitro it binds MHC, F-actin and native thin filaments, and modifies the activity of actin-activated myosin ATPase. It may modulate muscle contraction or may play a more structural role. The protein is Myosin-binding protein C, fast-type (MYBPC2) of Gallus gallus (Chicken).